We begin with the raw amino-acid sequence, 238 residues long: Probable metal transport system ATP-binding protein TP_0035 (238 aa).

The ABC transporter domain maps to Val-10 to Ala-231. Gly-44–Ser-51 provides a ligand contact to ATP.

The protein belongs to the ABC transporter superfamily.

It localises to the cell inner membrane. Functionally, part of an ATP-driven transport system TP_0034/TP_0035/TP_0036 for a metal. Probably responsible for energy coupling to the transport system. In Treponema pallidum (strain Nichols), this protein is Probable metal transport system ATP-binding protein TP_0035.